Reading from the N-terminus, the 377-residue chain is 2-aminoethylphosphonate--pyruvate transaminase (377 aa).

Lys-194 bears the N6-(pyridoxal phosphate)lysine mark.

Belongs to the class-V pyridoxal-phosphate-dependent aminotransferase family. PhnW subfamily. As to quaternary structure, homodimer. It depends on pyridoxal 5'-phosphate as a cofactor.

It catalyses the reaction (2-aminoethyl)phosphonate + pyruvate = phosphonoacetaldehyde + L-alanine. Functionally, involved in phosphonate degradation. This chain is 2-aminoethylphosphonate--pyruvate transaminase, found in Cupriavidus taiwanensis (strain DSM 17343 / BCRC 17206 / CCUG 44338 / CIP 107171 / LMG 19424 / R1) (Ralstonia taiwanensis (strain LMG 19424)).